The sequence spans 56 residues: Large ribosomal subunit protein bL32c (56 aa).

Belongs to the bacterial ribosomal protein bL32 family.

The protein localises to the plastid. It is found in the chloroplast. The sequence is that of Large ribosomal subunit protein bL32c from Platanus occidentalis (Sycamore).